Here is a 207-residue protein sequence, read N- to C-terminus: Ribosomal RNA small subunit methyltransferase G (207 aa).

Residues G73, L78, V124–E125, and R139 each bind S-adenosyl-L-methionine.

Belongs to the methyltransferase superfamily. RNA methyltransferase RsmG family.

The protein localises to the cytoplasm. It carries out the reaction guanosine(527) in 16S rRNA + S-adenosyl-L-methionine = N(7)-methylguanosine(527) in 16S rRNA + S-adenosyl-L-homocysteine. Specifically methylates the N7 position of guanine in position 527 of 16S rRNA. The polypeptide is Ribosomal RNA small subunit methyltransferase G (Escherichia coli (strain SMS-3-5 / SECEC)).